The following is a 475-amino-acid chain: MHFETVIGLEVHVELKTDSKMFSPSPAHFGAEPNSNTNVIDLAYPGVLPVVNRRAVDWAMRASMALNMDIATNSKFDRKNYFYPDNPKAYQISQFDQPIGENGYIDIEVDGETKRIGITRLHMEEDAGKSTHKDGYSLVDLNRQGTPLIEIVSEPDIRSPKEAYAYLEKLRSIIQYTGVSDCKMEEGSLRCDANISLRPYGQEEFGTKTELKNLNSFNYVRKGLEYEEKRQEEELLNGGTIGQETRRFDESTGKTILMRVKEGSDDYRYFPEPDIVPLYVDEEWKECVRQTIPELPDERKAKYVNDLGLPEYDAHVLTLTKEMSDFFEGAIEKGADVKLTSNWLMGGVNEYLNKNQVELQDTKLTPENLAGMIKLIEDGTMSSKIAKKVFPELAENGGDAKQIMEDKGLVQISDEATLTKFVTEALDNNPQSVEDYKNGKGKAMGFLVGQIMKASKGQANPQKVNQILKQELDKR.

It belongs to the GatB/GatE family. GatB subfamily. Heterotrimer of A, B and C subunits.

It carries out the reaction L-glutamyl-tRNA(Gln) + L-glutamine + ATP + H2O = L-glutaminyl-tRNA(Gln) + L-glutamate + ADP + phosphate + H(+). The enzyme catalyses L-aspartyl-tRNA(Asn) + L-glutamine + ATP + H2O = L-asparaginyl-tRNA(Asn) + L-glutamate + ADP + phosphate + 2 H(+). Functionally, allows the formation of correctly charged Asn-tRNA(Asn) or Gln-tRNA(Gln) through the transamidation of misacylated Asp-tRNA(Asn) or Glu-tRNA(Gln) in organisms which lack either or both of asparaginyl-tRNA or glutaminyl-tRNA synthetases. The reaction takes place in the presence of glutamine and ATP through an activated phospho-Asp-tRNA(Asn) or phospho-Glu-tRNA(Gln). This Staphylococcus haemolyticus (strain JCSC1435) protein is Aspartyl/glutamyl-tRNA(Asn/Gln) amidotransferase subunit B.